Here is a 103-residue protein sequence, read N- to C-terminus: Large ribosomal subunit protein uL24 (103 aa).

Belongs to the universal ribosomal protein uL24 family. In terms of assembly, part of the 50S ribosomal subunit.

Functionally, one of two assembly initiator proteins, it binds directly to the 5'-end of the 23S rRNA, where it nucleates assembly of the 50S subunit. One of the proteins that surrounds the polypeptide exit tunnel on the outside of the subunit. This Mannheimia succiniciproducens (strain KCTC 0769BP / MBEL55E) protein is Large ribosomal subunit protein uL24.